Consider the following 609-residue polypeptide: Serine/threonine-protein phosphatase 4 regulatory subunit 2 (609 aa).

Serine 68 carries the phosphoserine modification. Residues 175–569 (NNNGNADEGS…EEARVSPSAT (395 aa)) are disordered. Residues 183-194 (GSSPGAGSAGCA) are compositionally biased toward low complexity. Basic and acidic residues predominate over residues 201–225 (RSDDNDQPKAKKAKLEIDGEERSEA). A phosphoserine mark is found at serine 223 and serine 226. The segment covering 233–244 (VATRVKNEKDEK) has biased composition (basic and acidic residues). Serine 252 carries the post-translational modification Phosphoserine. Acidic residues predominate over residues 258–270 (EIEEPDEEVDEAD). Composition is skewed to basic and acidic residues over residues 310–351 (IEAE…KPDG) and 375–400 (EPVKVKAENEKEEKKHAPIKTEKQDD). Positions 401–410 (IDSTETDDAP) are enriched in acidic residues. Residues 414–462 (KPAEEKIASSESKPKTKSEDDPEAETKKSQPEKTETEAAEKSVSDEKQA) show a composition bias toward basic and acidic residues. Phosphothreonine is present on threonine 602. A Phosphoserine modification is found at serine 603.

It belongs to the PPP4R2 family. As to quaternary structure, serine/threonine-protein phosphatase 4 (PP4) occurs in different assemblies of the catalytic and one or more regulatory subunits. Probably part of a PP4 PPP4C-PPP4R2-PPP4R3 complex containing Pp4-19C, PPP4R2r and flfl.

Regulatory subunit of serine/threonine-protein phosphatase 4 (PP4). The probable PP4 complex Pp4-19C-PPP4R2r-flfl (PPP4C-PPP4R2-PPP4R3) is required to prevent caspase induced cell death (in vitro). The chain is Serine/threonine-protein phosphatase 4 regulatory subunit 2 (PPP4R2r) from Drosophila melanogaster (Fruit fly).